Here is a 62-residue protein sequence, read N- to C-terminus: Translational regulator CsrA (62 aa).

This sequence belongs to the CsrA/RsmA family. In terms of assembly, homodimer; the beta-strands of each monomer intercalate to form a hydrophobic core, while the alpha-helices form wings that extend away from the core.

It localises to the cytoplasm. Functionally, a key translational regulator that binds mRNA to regulate translation initiation and/or mRNA stability. Mediates global changes in gene expression, shifting from rapid growth to stress survival by linking envelope stress, the stringent response and the catabolite repression systems. Usually binds in the 5'-UTR; binding at or near the Shine-Dalgarno sequence prevents ribosome-binding, repressing translation, binding elsewhere in the 5'-UTR can activate translation and/or stabilize the mRNA. Its function is antagonized by small RNA(s). This chain is Translational regulator CsrA, found in Idiomarina loihiensis (strain ATCC BAA-735 / DSM 15497 / L2-TR).